The following is a 649-amino-acid chain: MKTFIKERGLAFFLIAVVLLWIKTYVGYVLNFNLGIDNTIQKILLFVNPLSSSLFFLGFGLLFKKKLQQTAIIVIHFLMSFLLYANIVYYRFFNDFITIPVIMQAKTNGGQLGDSAFSLMRPTDAFYFIDTIILIILAIKVNKPAETSSKKSFRIIFASSILVFLINLAVAESDRPELLTRSFDRNYLVKYLGTYNFTIYDAVQNIKSNSQRALADSSDVTEVENYMKANYDVPNNVYFGKAEGKNVIYVSLESLQSFIIDYKIDGKEVTPFLNKLAHDNETFYFDNFFHQTGQGKTSDAEFMMENSLYPLAQGSVFVNKAQNTLQSVPAILKSKNYTSATFHGNTQTFWNRNEMYKAEGIDKFFDSAYYDMNEENTKNYGMKDKPFFKESMPLLESLPQPFYTKFITLSNHFPFGMDEGDTDFPAGDFGDSVVDNYFQSAHYLDQSIEQFFNDLKKDGLYDKSIIVMYGDHYGISENHNKAMAKVLGKDEITDYDNAQLQRVPLFIHAAGVKGEKVHKYAGDVDVAPTILHLLGVDTKDYLMSGSDILSKEHREVIPFRNGDFISPKYTKISGKYYDTKTGKELDESEVDKSEDSLVKKELEMSDKIINGDLLRFYEPKGFKKVNPSDYDYTKHDEDSSETSKDNEDK.

The Cytoplasmic segment spans residues 1 to 9 (MKTFIKERG). The helical transmembrane segment at 10 to 30 (LAFFLIAVVLLWIKTYVGYVL) threads the bilayer. The Extracellular portion of the chain corresponds to 31-42 (NFNLGIDNTIQK). The helical transmembrane segment at 43-63 (ILLFVNPLSSSLFFLGFGLLF) threads the bilayer. At 64–69 (KKKLQQ) the chain is on the cytoplasmic side. Residues 70–90 (TAIIVIHFLMSFLLYANIVYY) traverse the membrane as a helical segment. Residues 91–118 (RFFNDFITIPVIMQAKTNGGQLGDSAFS) are Extracellular-facing. Residues 119–139 (LMRPTDAFYFIDTIILIILAI) form a helical membrane-spanning segment. The Cytoplasmic portion of the chain corresponds to 140 to 151 (KVNKPAETSSKK). The helical transmembrane segment at 152-172 (SFRIIFASSILVFLINLAVAE) threads the bilayer. At 173-649 (SDRPELLTRS…SETSKDNEDK (477 aa)) the chain is on the extracellular side. Mn(2+) is bound by residues Glu-253 and Thr-297. Thr-297 is a catalytic residue. Substrate is bound at residue His-412. Mn(2+)-binding residues include Asp-471 and His-472. Residues 622 to 649 (FKKVNPSDYDYTKHDEDSSETSKDNEDK) are disordered. Basic and acidic residues predominate over residues 631-649 (DYTKHDEDSSETSKDNEDK).

The protein belongs to the LTA synthase family. Proteolytically cleaved.

It localises to the cell membrane. The protein localises to the secreted. The protein operates within cell wall biogenesis; lipoteichoic acid biosynthesis. Its function is as follows. Catalyzes the polymerization of lipoteichoic acid (LTA) polyglycerol phosphate, a reaction that presumably uses phosphatidylglycerol (PG) as substrate. In Bacillus subtilis (strain 168), this protein is Lipoteichoic acid synthase 2 (ltaS2).